The chain runs to 429 residues: DNA polymerase delta small subunit (429 aa).

The protein belongs to the DNA polymerase delta/II small subunit family. As to quaternary structure, heterodimer with subunits of 125 kDa and 50 kDa.

Its subcellular location is the nucleus. It catalyses the reaction DNA(n) + a 2'-deoxyribonucleoside 5'-triphosphate = DNA(n+1) + diphosphate. In terms of biological role, the function of the small subunit is not yet clear. This is DNA polymerase delta small subunit (POLD2) from Oryza sativa subsp. japonica (Rice).